A 386-amino-acid chain; its full sequence is MGKLEKNVFVIWITTFTTMLGVGFIAPIMAIYAQTLGATNLEIGLIFGSFALARTVAQIPVGVLSDIYGKKFFIVCGTFFYGVSTLMYNFVSTVLGFLIVRIFTGIFSAFVTPVAGSYIAAIAPKTRLGEYMGIFNSAITLGFGIGPFIGGILADMYGIKMPFYFCGFLGILAAIISYMKLEDIVFNKNKEKIDVKKISTLFSFEFLKNRNFSSSFIINVSNVMINAGIYAYLALYAINYNITISQVGFMIALTNILMALLQRSFGKLYDKLGNIMIIIGIFIISFGMYLLSTSTTFLTILASLTIIAVGSSISSTATTSLAVKDIPTHRKGEAMGLFTTSINIGMFIGAVSFGFLADILGIANMYKFSAIFSIVVGIISYLRIER.

The next 12 membrane-spanning stretches (helical) occupy residues 8 to 28 (VFVI…IAPI), 43 to 63 (IGLI…PVGV), 79 to 99 (FFYG…GFLI), 102 to 122 (IFTG…IAAI), 134 to 154 (IFNS…GILA), 156 to 176 (MYGI…AAII), 216 to 236 (FIIN…LALY), 241 to 261 (NITI…MALL), 272 to 292 (LGNI…YLLS), 297 to 317 (FLTI…SSTA), 342 to 362 (INIG…ILGI), and 365 to 385 (MYKF…LRIE).

This sequence belongs to the major facilitator superfamily.

Its subcellular location is the cell membrane. This is an uncharacterized protein from Methanocaldococcus jannaschii (strain ATCC 43067 / DSM 2661 / JAL-1 / JCM 10045 / NBRC 100440) (Methanococcus jannaschii).